The primary structure comprises 129 residues: Lysozyme C (129 aa).

In terms of domain architecture, C-type lysozyme spans 1–129 (KVYGRCELAA…VHAWIRGCRL (129 aa)). Disulfide bonds link cysteine 6-cysteine 127, cysteine 30-cysteine 115, cysteine 64-cysteine 80, and cysteine 76-cysteine 94. Active-site residues include glutamate 35 and aspartate 52.

Belongs to the glycosyl hydrolase 22 family. In terms of assembly, monomer.

It is found in the secreted. The catalysed reaction is Hydrolysis of (1-&gt;4)-beta-linkages between N-acetylmuramic acid and N-acetyl-D-glucosamine residues in a peptidoglycan and between N-acetyl-D-glucosamine residues in chitodextrins.. Lysozymes have primarily a bacteriolytic function; those in tissues and body fluids are associated with the monocyte-macrophage system and enhance the activity of immunoagents. The polypeptide is Lysozyme C (LYZ) (Lophophorus impejanus (Himalayan monal pheasant)).